Reading from the N-terminus, the 458-residue chain is D-inositol 3-phosphate glycosyltransferase (458 aa).

The disordered stretch occupies residues 1-29 (MRADRPGHRSRGINPGPGMFTLVGPDERD). Histidine 47 is a 1D-myo-inositol 3-phosphate binding site. UDP-N-acetyl-alpha-D-glucosamine-binding positions include 53–54 (QP) and glycine 61. Residues 58–63 (DAGGMN), lysine 116, tyrosine 149, threonine 173, and arginine 193 contribute to the 1D-myo-inositol 3-phosphate site. UDP-N-acetyl-alpha-D-glucosamine contacts are provided by arginine 267, lysine 272, and valine 339. Alanine 351 is a Mg(2+) binding site. Residues glutamate 361 and glutamate 369 each coordinate UDP-N-acetyl-alpha-D-glucosamine. Threonine 375 contributes to the Mg(2+) binding site.

It belongs to the glycosyltransferase group 1 family. MshA subfamily. In terms of assembly, homodimer.

The catalysed reaction is 1D-myo-inositol 3-phosphate + UDP-N-acetyl-alpha-D-glucosamine = 1D-myo-inositol 2-acetamido-2-deoxy-alpha-D-glucopyranoside 3-phosphate + UDP + H(+). Catalyzes the transfer of a N-acetyl-glucosamine moiety to 1D-myo-inositol 3-phosphate to produce 1D-myo-inositol 2-acetamido-2-deoxy-glucopyranoside 3-phosphate in the mycothiol biosynthesis pathway. This is D-inositol 3-phosphate glycosyltransferase from Nocardioides sp. (strain ATCC BAA-499 / JS614).